The primary structure comprises 72 residues: Exodeoxyribonuclease 7 small subunit (72 aa).

It belongs to the XseB family. In terms of assembly, heterooligomer composed of large and small subunits.

It localises to the cytoplasm. The catalysed reaction is Exonucleolytic cleavage in either 5'- to 3'- or 3'- to 5'-direction to yield nucleoside 5'-phosphates.. Bidirectionally degrades single-stranded DNA into large acid-insoluble oligonucleotides, which are then degraded further into small acid-soluble oligonucleotides. The sequence is that of Exodeoxyribonuclease 7 small subunit from Ruegeria pomeroyi (strain ATCC 700808 / DSM 15171 / DSS-3) (Silicibacter pomeroyi).